The following is a 366-amino-acid chain: MLWKNYVLSSSRITRRLHKSPRKSSFSKNFFITGCLLTVGAVSSYLTYRYTSERENKHELSPSYFVKYKISHKRDIDSSHFLLEVTPLFKQKVNIWSLMTAENLWSVEIKQPEVMVVRNYTPLPLKFNPASKEIEILKDGDNADGKLSFYIKKYENGEVARWLHHLPKGHIIEIRGPFIDYEFPHLPNELKRSRDCLYMDNRNERGNNVRENSQFIYQPYDIMMFTAGTGIVTALQLLLTESPFRGTIKLFHTDKNIKQLGPLYPILLRLQASNRVQLKIFETDRQTKQDVLKSIQKSITKPYPYKGLLPFSNVNNKNIMPVLALVCGPESYISSISGRKYDLNQGPVGGLLSKEGWNSDNVYKLS.

The transit peptide at Met-1 to Tyr-50 directs the protein to the mitochondrion. The region spanning Ser-63–Pro-184 is the FAD-binding FR-type domain.

The cofactor is FAD.

It is found in the mitochondrion inner membrane. In terms of biological role, redox component that participates in c-type cytochrome biogenesis in the mitochondrial intermembrane space. May play a role in the reduction of heme prior to its ligation to apocytochrome c by cytochrome c heme lyase. Has oxidoreductase activity in vitro. This chain is Cytochrome c mitochondrial import factor CYC2 (CYC2), found in Saccharomyces cerevisiae (strain ATCC 204508 / S288c) (Baker's yeast).